Reading from the N-terminus, the 87-residue chain is Small cysteine-rich outer membrane protein omcA (87 aa).

An N-terminal signal peptide occupies residues Met1–Ser19. Residue Cys20 is the site of N-palmitoyl cysteine attachment. Cys20 is lipidated: S-diacylglycerol cysteine.

In terms of assembly, part of a disulfide cross-linked outer membrane complex (COMC) composed of the major outer membrane porin (MOMP), the small cysteine-rich protein (omcA) and the large cysteine-rich periplasmic protein (omcB). In terms of processing, N-terminal amide-linked and S-diacylglycerol cysteine-linked to 16:0, 18:0, 15:0 branched, and 17:0 branched fatty acids (ratio 6:5:3:4) in the EB stage. The exact distribution of fatty acids has not been determined. The N-terminus is blocked.

The protein resides in the cell outer membrane. Its function is as follows. In elementary bodies (EBs, the infectious stage, which is able to survive outside the host cell) provides the structural integrity of the outer envelope through disulfide cross-links with the large cysteine-rich periplasmic protein and the major outer membrane porin. It has been described in publications as the Sarkosyl-insoluble COMC (Chlamydia outer membrane complex), and serves as the functional equivalent of peptidoglycan. The polypeptide is Small cysteine-rich outer membrane protein omcA (omcA) (Chlamydia psittaci (Chlamydophila psittaci)).